The chain runs to 179 residues: Orotate phosphoribosyltransferase (179 aa).

Residues R94, K95, K98, H100, and 120–128 (EDTSTTGNS) each bind 5-phospho-alpha-D-ribose 1-diphosphate. 2 residues coordinate orotate: T124 and R152.

Belongs to the purine/pyrimidine phosphoribosyltransferase family. PyrE subfamily. In terms of assembly, homodimer. It depends on Mg(2+) as a cofactor.

It carries out the reaction orotidine 5'-phosphate + diphosphate = orotate + 5-phospho-alpha-D-ribose 1-diphosphate. Its pathway is pyrimidine metabolism; UMP biosynthesis via de novo pathway; UMP from orotate: step 1/2. Its function is as follows. Catalyzes the transfer of a ribosyl phosphate group from 5-phosphoribose 1-diphosphate to orotate, leading to the formation of orotidine monophosphate (OMP). This is Orotate phosphoribosyltransferase from Mycobacterium avium (strain 104).